Here is a 274-residue protein sequence, read N- to C-terminus: MASKSQVPYEDRARDHPNPLARRLFQIATEKQSNVAVSADVTTTKELLDLADRLGPYMVVLKTHIDILADFSAETITGLQSLSQKHNFLIFEDRKFVDIGNTVQKQYHGGALHISEWAHIVNATVLPGPGIIDALAQVASAPDFPHASDRGLLILATMTSKGSLATGQYTELSVELARKYKGFVLGFVASRSLEGVETAGKADDEDFVLFTTGVNLASKGDALGQQYQTPESAIGGGADFIISGRGIYAAPDPVDAARRYQKAGWDAYLKRVGR.

Residues D40, 62–64 (KTH), 93–102 (DRKFVDIGNT), Y227, and R245 contribute to the substrate site. The active-site Proton donor is K95.

This sequence belongs to the OMP decarboxylase family.

The catalysed reaction is orotidine 5'-phosphate + H(+) = UMP + CO2. Its pathway is pyrimidine metabolism; UMP biosynthesis via de novo pathway; UMP from orotate: step 2/2. The polypeptide is Orotidine 5'-phosphate decarboxylase (URA3) (Coccidioides immitis (strain RS) (Valley fever fungus)).